A 739-amino-acid chain; its full sequence is MFKADLGRIGIQLHTTYSRRIRKVKVMDNRKEPPFFNEDNVGPFYFKLPFYDTMELFIETLTGTCFELRVSPFEAVISVKGKIQRLEGIPICQQHLIWNNMELEDDYCLNDYNISEGCTLKLVLAMRGGPISTRKVPVEDPLRELAEYMDSSRDEVWEKTSCNKQVTFLVYREGDQLNFFRVVDRGDGTLTPLSESLSGSVYNLYTDEDEEAEPSPSGQQIIENSITMNKMKLLKAKMENMNLSKKPKKVVKVKPRPPLAPRPTSSSTAAARHRLLRVLPHIGQSCLPSGNAHLPETSRNAGPSPAAQAPADRPVSSLRNELLKDDDNWEINMLSHSTSSIRLLPQLTHIELESDKELADSVLHLGSSLSRRTKHLSGNLLSNNEDDVVLFPRSEECVADELLLPEVGAFAPFAEGTGAEQSSGVEGLGKVTPEFPLTKGDGGLRAAEQPLSHVARVLSSEPGDNAVLNHREPSSHKNRLLSPLLCAAPVSLHNSLVKPQRQSKCFESGNPSASTSQNTLRELDIRTIADSSFSRTARFRGVKVDSPGKRSDIISKVEARDITEMANKASKEPVGCVNNNGFLASLARSASRDSLQSTHGACRLRSSGIGLSTNFQHFQDENIRKSSPQSEPTDFFLSARGIGMSGSNAAAGKRIGESIHHLPPVKAPLQTKKKIMKHCFLCGKKTGLATSFECRCGNNFCASHRYAEAHGCTYDYKSAGRRYLEEANPVVNAPKLPKI.

The 76-residue stretch at 54–129 (MELFIETLTG…LKLVLAMRGG (76 aa)) folds into the Ubiquitin-like domain. Over residues 246–255 (KPKKVVKVKP) the composition is skewed to basic residues. 2 disordered regions span residues 246-270 (KPKKVVKVKPRPPLAPRPTSSSTAA) and 287-316 (LPSGNAHLPETSRNAGPSPAAQAPADRPVS). An AN1-type zinc finger spans residues 673–720 (KKIMKHCFLCGKKTGLATSFECRCGNNFCASHRYAEAHGCTYDYKSAG). Zn(2+) contacts are provided by Cys-679, Cys-682, Cys-694, Cys-696, Cys-701, His-704, His-710, and Cys-712.

This is AN1-type zinc finger protein 4 (Zfand4) from Mus musculus (Mouse).